Reading from the N-terminus, the 453-residue chain is Alpha-galacturonidase (453 aa).

11–72 (IKIAYIGGGS…SQWEYKSVDS (62 aa)) provides a ligand contact to NAD(+). Asparagine 151 provides a ligand contact to substrate. Cysteine 173 serves as a coordination point for Mn(2+). Histidine 174 serves as the catalytic Proton donor. Histidine 209 is a Mn(2+) binding site.

This sequence belongs to the glycosyl hydrolase 4 family. As to quaternary structure, homotetramer. NAD(+) is required as a cofactor. The cofactor is Mn(2+).

The catalysed reaction is [(1-&gt;4)-alpha-D-galacturonosyl](n) + H2O = alpha-D-galacturonate + [(1-&gt;4)-alpha-D-galacturonosyl](n-1). Alpha-galacturonidase able to catalyze the hydrolysis of the chromogenic substrate p-nitrophenyl-alpha-D-galacturonic acid (pNPalphaGalUA). It is probable that alpha-1,4-di-galacturonate (GalUA(2)) is the naturally occurring substrate. The sequence is that of Alpha-galacturonidase from Thermoanaerobacter italicus (strain DSM 9252 / Ab9).